The sequence spans 326 residues: N-acetyl-gamma-glutamyl-phosphate reductase (326 aa).

Cys-155 is a catalytic residue.

Belongs to the NAGSA dehydrogenase family. Type 1 subfamily.

Its subcellular location is the cytoplasm. It catalyses the reaction N-acetyl-L-glutamate 5-semialdehyde + phosphate + NADP(+) = N-acetyl-L-glutamyl 5-phosphate + NADPH + H(+). The protein operates within amino-acid biosynthesis; L-arginine biosynthesis; N(2)-acetyl-L-ornithine from L-glutamate: step 3/4. In terms of biological role, catalyzes the NADPH-dependent reduction of N-acetyl-5-glutamyl phosphate to yield N-acetyl-L-glutamate 5-semialdehyde. In Shewanella frigidimarina (strain NCIMB 400), this protein is N-acetyl-gamma-glutamyl-phosphate reductase.